A 457-amino-acid chain; its full sequence is Chromosomal replication initiator protein DnaA (457 aa).

The domain I, interacts with DnaA modulators stretch occupies residues M1–F75. Positions F75–A118 are domain II. Positions T119 to S335 are domain III, AAA+ region. ATP-binding residues include G163, G165, K166, and T167. The domain IV, binds dsDNA stretch occupies residues S336–K457.

It belongs to the DnaA family. In terms of assembly, oligomerizes as a right-handed, spiral filament on DNA at oriC.

The protein localises to the cytoplasm. Functionally, plays an essential role in the initiation and regulation of chromosomal replication. ATP-DnaA binds to the origin of replication (oriC) to initiate formation of the DNA replication initiation complex once per cell cycle. Binds the DnaA box (a 9 base pair repeat at the origin) and separates the double-stranded (ds)DNA. Forms a right-handed helical filament on oriC DNA; dsDNA binds to the exterior of the filament while single-stranded (ss)DNA is stabiized in the filament's interior. The ATP-DnaA-oriC complex binds and stabilizes one strand of the AT-rich DNA unwinding element (DUE), permitting loading of DNA polymerase. After initiation quickly degrades to an ADP-DnaA complex that is not apt for DNA replication. Binds acidic phospholipids. The polypeptide is Chromosomal replication initiator protein DnaA (Clostridium perfringens (strain ATCC 13124 / DSM 756 / JCM 1290 / NCIMB 6125 / NCTC 8237 / Type A)).